A 322-amino-acid polypeptide reads, in one-letter code: Transmembrane and ubiquitin-like domain-containing protein 2 (322 aa).

The chain crosses the membrane as a helical span at residues 38-58 (VVAGVVVLILALVLAWLSTYV). The segment at 88 to 168 (VAGQGTPEPT…VRSEDSTCLP (81 aa)) is disordered. Residues 115-130 (EGGGDPTGEPGAGGGV) are compositionally biased toward gly residues. Residues 174–247 (ISVRLKFFND…IHCHRSPPGS (74 aa)) form the Ubiquitin-like domain. 2 helical membrane passes run 267–287 (LGVS…GVVW) and 296–316 (FFTA…SFLV).

It is found in the membrane. The sequence is that of Transmembrane and ubiquitin-like domain-containing protein 2 (TMUB2) from Bos taurus (Bovine).